The following is a 463-amino-acid chain: uncharacterized protein (463 aa).

Positions 1–93 constitute a PE domain; that stretch reads MSYMIAVPDM…AGAYASAEAT (93 aa). 2 disordered regions span residues 231–320 and 408–463; these read GGAG…AGNG and NGGD…TPGQ. Over residues 408-451 the composition is skewed to gly residues; sequence NGGDGGKGGDAQLIGNGGNGGNGGKGGTGLMPGINGTGGAGGSR.

This sequence belongs to the mycobacterial PE family. PGRS subfamily.

This is an uncharacterized protein from Mycobacterium tuberculosis (strain ATCC 25618 / H37Rv).